Here is a 381-residue protein sequence, read N- to C-terminus: Putative glutamate--cysteine ligase 2 (381 aa).

It belongs to the glutamate--cysteine ligase type 2 family. YbdK subfamily.

The enzyme catalyses L-cysteine + L-glutamate + ATP = gamma-L-glutamyl-L-cysteine + ADP + phosphate + H(+). In terms of biological role, ATP-dependent carboxylate-amine ligase which exhibits weak glutamate--cysteine ligase activity. The polypeptide is Putative glutamate--cysteine ligase 2 (Polaromonas naphthalenivorans (strain CJ2)).